A 91-amino-acid polypeptide reads, in one-letter code: Cytochrome c-554(547) (91 aa).

Residues C15, C18, H19, and M64 each contribute to the heme c site.

In terms of assembly, monomer. Binds 1 heme c group covalently per subunit.

This is Cytochrome c-554(547) from Halothiobacillus neapolitanus (Thiobacillus neapolitanus).